The chain runs to 98 residues: Protein Vpr (98 aa).

Residues 1 to 42 (MEQLPEDQGPQREPYNEWTLEILEELKREAVRHFPRDWLHQL) are homooligomerization. 2 positions are modified to phosphoserine; by host: Ser79 and Ser98.

This sequence belongs to the HIV-1 VPR protein family. Homooligomer, may form homodimer. Interacts with p6-gag region of the Pr55 Gag precursor protein through a (Leu-X-X)4 motif near the C-terminus of the P6gag protein. Interacts with host UNG. May interact with host RAD23A/HHR23A. Interacts with host VPRBP/DCAF1, leading to hijack the CUL4A-RBX1-DDB1-DCAF1/VPRBP complex, mediating ubiquitination of host proteins such as TERT and ZGPAT and arrest of the cell cycle in G2 phase. In terms of processing, phosphorylated on several residues by host. These phosphorylations regulate VPR activity for the nuclear import of the HIV-1 pre-integration complex.

Its subcellular location is the virion. The protein localises to the host nucleus. It is found in the host extracellular space. In terms of biological role, during virus replication, may deplete host UNG protein, and incude G2-M cell cycle arrest. Acts by targeting specific host proteins for degradation by the 26S proteasome, through association with the cellular CUL4A-DDB1 E3 ligase complex by direct interaction with host VPRPB/DCAF-1. Cell cycle arrest reportedly occurs within hours of infection and is not blocked by antiviral agents, suggesting that it is initiated by the VPR carried into the virion. Additionally, VPR induces apoptosis in a cell cycle dependent manner suggesting that these two effects are mechanistically linked. Detected in the serum and cerebrospinal fluid of AIDS patient, VPR may also induce cell death to bystander cells. Functionally, during virus entry, plays a role in the transport of the viral pre-integration (PIC) complex to the host nucleus. This function is crucial for viral infection of non-dividing macrophages. May act directly at the nuclear pore complex, by binding nucleoporins phenylalanine-glycine (FG)-repeat regions. This Pan troglodytes (Chimpanzee) protein is Protein Vpr.